The chain runs to 536 residues: Phosphoenolpyruvate carboxykinase (ATP) (536 aa).

Residues Arg61, Tyr195, and Lys201 each coordinate substrate. ATP is bound by residues Lys201, His220, and 236–244 (GLSGTGKTT). Mn(2+) contacts are provided by Lys201 and His220. Asp257 lines the Mn(2+) pocket. Residues Glu285, Arg322, and Thr447 each contribute to the ATP site. Arg322 contributes to the substrate binding site.

It belongs to the phosphoenolpyruvate carboxykinase (ATP) family. The cofactor is Mn(2+).

It is found in the cytoplasm. The catalysed reaction is oxaloacetate + ATP = phosphoenolpyruvate + ADP + CO2. The protein operates within carbohydrate biosynthesis; gluconeogenesis. Involved in the gluconeogenesis. Catalyzes the conversion of oxaloacetate (OAA) to phosphoenolpyruvate (PEP) through direct phosphoryl transfer between the nucleoside triphosphate and OAA. This Mesorhizobium japonicum (strain LMG 29417 / CECT 9101 / MAFF 303099) (Mesorhizobium loti (strain MAFF 303099)) protein is Phosphoenolpyruvate carboxykinase (ATP).